The sequence spans 115 residues: DNA-binding protein PYRAB09250 (115 aa).

This sequence belongs to the PDCD5 family.

This chain is DNA-binding protein PYRAB09250, found in Pyrococcus abyssi (strain GE5 / Orsay).